Here is a 680-residue protein sequence, read N- to C-terminus: Tumor protein 63 (680 aa).

Residues 1–107 (MNFETSRCAT…MQDSDLSDPM (107 aa)) are transcription activation. Residues 122 to 157 (QQIQNGSSSTSPYNTDHAQNSVTAPSPYAQPSSTFD) are compositionally biased toward polar residues. Positions 122 to 171 (QQIQNGSSSTSPYNTDHAQNSVTAPSPYAQPSSTFDALSPSPAIPSNTDY) are disordered. A DNA-binding region spans residues 170 to 362 (DYPGPHSFDV…KADEDSIRKQ (193 aa)). Residues cysteine 244, histidine 247, cysteine 308, and cysteine 312 each coordinate Zn(2+). A compositionally biased stretch (basic and acidic residues) spans 351-360 (DRKADEDSIR). 2 disordered regions span residues 351 to 393 (DRKA…IKKR) and 436 to 472 (RQQQ…MNSM). The segment at 352–388 (RKADEDSIRKQQVSDSAKNGDGTKRPFRQNTHGIQMT) is interaction with HIPK2. The span at 379–389 (RQNTHGIQMTS) shows a compositional bias: polar residues. The oligomerization stretch occupies residues 394–443 (RSPDDELLYLPVRGRETYEMLLKIKESLELMQYLPQHTIETYRQQQQQQH). Low complexity predominate over residues 437–463 (QQQQQQHQHLLQKQTSMQSQSSYGNSS). The SAM domain occupies 541–607 (PPYPTDCSIV…WKGILDHRQL (67 aa)). A transactivation inhibition region spans residues 610 to 680 (FSSPPHLLRT…KQQRIKEEGE (71 aa)). Residue lysine 676 forms a Glycyl lysine isopeptide (Lys-Gly) (interchain with G-Cter in SUMO) linkage.

The protein belongs to the p53 family. As to quaternary structure, binds DNA as a homotetramer. Isoform composition of the tetramer may determine transactivation activity. Interacts with HIPK2. Interacts with SSRP1, leading to stimulate coactivator activity. Interacts with WWP1. Interacts with PDS5A. Interacts (via activation domain) with NOC2L. Requires Zn(2+) as cofactor. In terms of processing, may be sumoylated. Ubiquitinated. Polyubiquitination involves WWP1 and leads to proteasomal degradation of this protein. Widely expressed, notably in thymus, prostate, placenta, and skeletal muscle, although the precise isoform varies according to tissue type. Progenitor cell layers of skin, breast and prostate express high levels of DeltaN-type isoforms.

It localises to the nucleus. Functionally, acts as a sequence specific DNA binding transcriptional activator or repressor. The isoforms contain a varying set of transactivation and auto-regulating transactivation inhibiting domains thus showing an isoform specific activity. May be required in conjunction with TP73/p73 for initiation of p53/TP53 dependent apoptosis in response to genotoxic insults and the presence of activated oncogenes. Involved in Notch signaling by probably inducing JAG1 and JAG2. Activates RIPK4 transcription. Plays a role in the regulation of epithelial morphogenesis. The ratio of DeltaN-type and TA*-type isoforms may govern the maintenance of epithelial stem cell compartments and regulate the initiation of epithelial stratification from the undifferentiated embryonal ectoderm. Required for limb formation from the apical ectodermal ridge. Activates transcription of the p21 promoter. In Rattus norvegicus (Rat), this protein is Tumor protein 63 (Tp63).